Here is a 398-residue protein sequence, read N- to C-terminus: Succinate--CoA ligase [ADP-forming] subunit beta (398 aa).

Residues 9–254 enclose the ATP-grasp domain; it reads KALLHEFGVP…ETEEDAKEIE (246 aa). ATP contacts are provided by residues Lys-46, 53–55, Glu-109, Ser-112, and Glu-117; that span reads GRG. Asn-209 and Asp-223 together coordinate Mg(2+). Substrate-binding positions include Asn-274 and 331–333; that span reads GIM.

The protein belongs to the succinate/malate CoA ligase beta subunit family. In terms of assembly, heterotetramer of two alpha and two beta subunits. Requires Mg(2+) as cofactor.

It carries out the reaction succinate + ATP + CoA = succinyl-CoA + ADP + phosphate. It catalyses the reaction GTP + succinate + CoA = succinyl-CoA + GDP + phosphate. It participates in carbohydrate metabolism; tricarboxylic acid cycle; succinate from succinyl-CoA (ligase route): step 1/1. Its function is as follows. Succinyl-CoA synthetase functions in the citric acid cycle (TCA), coupling the hydrolysis of succinyl-CoA to the synthesis of either ATP or GTP and thus represents the only step of substrate-level phosphorylation in the TCA. The beta subunit provides nucleotide specificity of the enzyme and binds the substrate succinate, while the binding sites for coenzyme A and phosphate are found in the alpha subunit. The chain is Succinate--CoA ligase [ADP-forming] subunit beta from Bradyrhizobium sp. (strain ORS 278).